We begin with the raw amino-acid sequence, 159 residues long: Protein-export protein SecB (159 aa).

This sequence belongs to the SecB family. In terms of assembly, homotetramer, a dimer of dimers. One homotetramer interacts with 1 SecA dimer.

The protein resides in the cytoplasm. In terms of biological role, one of the proteins required for the normal export of preproteins out of the cell cytoplasm. It is a molecular chaperone that binds to a subset of precursor proteins, maintaining them in a translocation-competent state. It also specifically binds to its receptor SecA. The sequence is that of Protein-export protein SecB from Aromatoleum aromaticum (strain DSM 19018 / LMG 30748 / EbN1) (Azoarcus sp. (strain EbN1)).